A 310-amino-acid polypeptide reads, in one-letter code: Taste receptor type 2 member 125 (310 aa).

Residues 1–2 (MG) lie on the Extracellular side of the membrane. Residues 3 to 23 (IVIGIICAFIIIVQFIIGNVA) traverse the membrane as a helical segment. Residues 24-46 (NGFIALVNIIDWVKRRKISLVDQ) are Cytoplasmic-facing. The chain crosses the membrane as a helical span at residues 47–67 (IITALAISRIDMLCSTFLIVL). The Extracellular portion of the chain corresponds to 68-87 (ITSLYPDLNTAVNMVKISNN). The chain crosses the membrane as a helical span at residues 88-108 (IWIVANHFSIWLATSLSIFYF). Topologically, residues 109-128 (LKIANFSNYVFLCLRWRLSK) are cytoplasmic. Residues 129–149 (VVSVTLLLSLVLLLMNILIMN) form a helical membrane-spanning segment. The Extracellular segment spans residues 150–185 (MHIDTWSDGFKRNVSFGFRSKNCTRFFKLALLINTT). 3 N-linked (GlcNAc...) asparagine glycosylation sites follow: asparagine 162, asparagine 171, and asparagine 183. Residues 186 to 206 (FTCVPFTVSMVAFLLLIFSLW) form a helical membrane-spanning segment. Over 207 to 232 (RHLKNMQYHAKGSRDPSTAVHIKALQ) the chain is Cytoplasmic. Residues 233 to 253 (MVVVFVLFYTFFFLSLAIQLW) form a helical membrane-spanning segment. At 254 to 261 (TSESLEKN) the chain is on the extracellular side. Residues 262-282 (NLFYVTLIITFPSVHSCMLIL) traverse the membrane as a helical segment. The Cytoplasmic portion of the chain corresponds to 283–310 (RNSKLRQASLLVLWWLLCRSKDIQTLVP).

The protein belongs to the G-protein coupled receptor T2R family.

Its subcellular location is the membrane. Its function is as follows. Putative taste receptor which may play a role in the perception of bitterness. The chain is Taste receptor type 2 member 125 from Rattus norvegicus (Rat).